The chain runs to 898 residues: Fasciclin-2 (898 aa).

Positions 1–22 (MRTVACAVLLACFMGCLAGAWA) are cleaved as a signal peptide. Topologically, residues 23–764 (QSAGLEILPN…EDGSEGQMSS (742 aa)) are extracellular. 5 Ig-like C2-type domains span residues 31–124 (PNSE…KQLS), 134–219 (PITW…RPIR), 226–316 (PQMS…VEVT), 321–423 (PRIG…GHLM), and 428–525 (PSFA…IMLR). Residues Asn-35, Asn-51, Asn-149, Asn-192, Asn-297, and Asn-328 are each glycosylated (N-linked (GlcNAc...) asparagine). Residues Cys-48 and Cys-113 are joined by a disulfide bond. 2 cysteine pairs are disulfide-bonded: Cys-156–Cys-203 and Cys-248–Cys-300. An intrachain disulfide couples Cys-343 to Cys-407. N-linked (GlcNAc...) asparagine glycosylation is found at Asn-447, Asn-457, and Asn-580. The cysteines at positions 450 and 509 are disulfide-linked. 2 Fibronectin type-III domains span residues 532–626 (AVLQ…TPRI) and 644–745 (GTEN…VKDP). The helical transmembrane segment at 765–782 (AAIVVLVVAALLLALLVV) threads the bilayer. Topologically, residues 783 to 898 (DLVCCLVWRG…TSFVGKDSAV (116 aa)) are cytoplasmic.

It localises to the membrane. Its function is as follows. Neuronal recognition molecule. Involved in a pathway recognition for axons during the development of nerve fascicles. The sequence is that of Fasciclin-2 (FAS2) from Schistocerca americana (American grasshopper).